We begin with the raw amino-acid sequence, 1383 residues long: DNA-directed RNA polymerase subunit beta (1383 aa).

The protein belongs to the RNA polymerase beta chain family. The RNAP catalytic core consists of 2 alpha, 1 beta, 1 beta' and 1 omega subunit. When a sigma factor is associated with the core the holoenzyme is formed, which can initiate transcription.

It carries out the reaction RNA(n) + a ribonucleoside 5'-triphosphate = RNA(n+1) + diphosphate. DNA-dependent RNA polymerase catalyzes the transcription of DNA into RNA using the four ribonucleoside triphosphates as substrates. This chain is DNA-directed RNA polymerase subunit beta, found in Xanthomonas oryzae pv. oryzae (strain MAFF 311018).